We begin with the raw amino-acid sequence, 288 residues long: ATP phosphoribosyltransferase (288 aa).

Belongs to the ATP phosphoribosyltransferase family. Long subfamily. Mg(2+) serves as cofactor.

It is found in the cytoplasm. It catalyses the reaction 1-(5-phospho-beta-D-ribosyl)-ATP + diphosphate = 5-phospho-alpha-D-ribose 1-diphosphate + ATP. Its pathway is amino-acid biosynthesis; L-histidine biosynthesis; L-histidine from 5-phospho-alpha-D-ribose 1-diphosphate: step 1/9. Its activity is regulated as follows. Feedback inhibited by histidine. Functionally, catalyzes the condensation of ATP and 5-phosphoribose 1-diphosphate to form N'-(5'-phosphoribosyl)-ATP (PR-ATP). Has a crucial role in the pathway because the rate of histidine biosynthesis seems to be controlled primarily by regulation of HisG enzymatic activity. The polypeptide is ATP phosphoribosyltransferase (hisG) (Methanocaldococcus jannaschii (strain ATCC 43067 / DSM 2661 / JAL-1 / JCM 10045 / NBRC 100440) (Methanococcus jannaschii)).